A 251-amino-acid polypeptide reads, in one-letter code: uncharacterized protein (251 aa).

Residues 1–15 form the signal peptide; the sequence is MSAISSLVLIGWAMC. N225 and N242 each carry an N-linked (GlcNAc...) asparagine glycan.

This is an uncharacterized protein from Encephalitozoon cuniculi (strain GB-M1) (Microsporidian parasite).